The chain runs to 159 residues: uncharacterized protein (159 aa).

This is an uncharacterized protein from Bacillus subtilis (strain 168).